Here is a 356-residue protein sequence, read N- to C-terminus: Arginine kinase (356 aa).

At alanine 2 the chain carries N-acetylalanine. A Phosphagen kinase N-terminal domain is found at 9-91 (KLEAGFKKLE…FDPIIEDYHV (83 aa)). 64 to 68 (GVGIY) contributes to the L-arginine binding site. A Phosphagen kinase C-terminal domain is found at 119-356 (YVISTRVRCG…LELIKMEKEM (238 aa)). Residues 122–126 (STRVR) and histidine 185 each bind ATP. Residue glutamate 225 participates in L-arginine binding. ATP is bound at residue arginine 229. Cysteine 271 serves as a coordination point for L-arginine. Residues 280–284 (RASVH) and 309–314 (RGTRGE) contribute to the ATP site. L-arginine is bound at residue glutamate 314.

This sequence belongs to the ATP:guanido phosphotransferase family.

The catalysed reaction is L-arginine + ATP = N(omega)-phospho-L-arginine + ADP + H(+). This is Arginine kinase from Penaeus monodon (Giant tiger prawn).